A 274-amino-acid chain; its full sequence is Phosphatidylglycerol--prolipoprotein diacylglyceryl transferase (274 aa).

4 helical membrane-spanning segments follow: residues 19–39 (VGSVVIRWYGVLIAAAIVLGL), 59–79 (LAIWLVIGAIPCARLYYVLFQ), 93–113 (IWRGGIAIHGAILGGMLAALI), and 120–140 (VSFWQLADLVAPSLILGQAIG). Arg-141 lines the a 1,2-diacyl-sn-glycero-3-phospho-(1'-sn-glycerol) pocket. 3 consecutive transmembrane segments (helical) span residues 181-201 (TFLYESVWNLMVLGILLALFF), 209-229 (GTIFLVYAVTYSLGRLWIEGL), and 243-263 (QVVSLIGIGIGMLGLTWLYLL).

Belongs to the Lgt family.

It is found in the cell inner membrane. The catalysed reaction is L-cysteinyl-[prolipoprotein] + a 1,2-diacyl-sn-glycero-3-phospho-(1'-sn-glycerol) = an S-1,2-diacyl-sn-glyceryl-L-cysteinyl-[prolipoprotein] + sn-glycerol 1-phosphate + H(+). Its pathway is protein modification; lipoprotein biosynthesis (diacylglyceryl transfer). In terms of biological role, catalyzes the transfer of the diacylglyceryl group from phosphatidylglycerol to the sulfhydryl group of the N-terminal cysteine of a prolipoprotein, the first step in the formation of mature lipoproteins. The protein is Phosphatidylglycerol--prolipoprotein diacylglyceryl transferase of Acaryochloris marina (strain MBIC 11017).